The sequence spans 156 residues: Small ribosomal subunit protein uS7 (156 aa).

It belongs to the universal ribosomal protein uS7 family. Part of the 30S ribosomal subunit. Contacts proteins S9 and S11.

Functionally, one of the primary rRNA binding proteins, it binds directly to 16S rRNA where it nucleates assembly of the head domain of the 30S subunit. Is located at the subunit interface close to the decoding center, probably blocks exit of the E-site tRNA. The chain is Small ribosomal subunit protein uS7 from Carboxydothermus hydrogenoformans (strain ATCC BAA-161 / DSM 6008 / Z-2901).